A 164-amino-acid chain; its full sequence is Phosphopantetheine adenylyltransferase (164 aa).

Residue Ser11 coordinates substrate. ATP is bound by residues 11 to 12 (SF) and His19. Positions 43, 76, and 90 each coordinate substrate. ATP is bound by residues 91–93 (GLR), Glu101, and 126–132 (YQHISSS).

This sequence belongs to the bacterial CoaD family. In terms of assembly, homohexamer. Mg(2+) serves as cofactor.

Its subcellular location is the cytoplasm. The enzyme catalyses (R)-4'-phosphopantetheine + ATP + H(+) = 3'-dephospho-CoA + diphosphate. The protein operates within cofactor biosynthesis; coenzyme A biosynthesis; CoA from (R)-pantothenate: step 4/5. Functionally, reversibly transfers an adenylyl group from ATP to 4'-phosphopantetheine, yielding dephospho-CoA (dPCoA) and pyrophosphate. The protein is Phosphopantetheine adenylyltransferase of Streptococcus gordonii (strain Challis / ATCC 35105 / BCRC 15272 / CH1 / DL1 / V288).